Reading from the N-terminus, the 982-residue chain is Nitrate reductase [NADPH] (982 aa).

Positions M1–L128 are disordered. The segment covering Q10 to Q20 has biased composition (basic and acidic residues). Low complexity predominate over residues T63 to S110. C240 lines the Mo-molybdopterin pocket. The Cytochrome b5 heme-binding domain maps to T617–T692. Heme-binding residues include H652 and H675. Residues K721–Q836 form the FAD-binding FR-type domain. FAD-binding positions include R776–T779, L794–Y798, Q810–T812, S860, and T863. M952–M961 serves as a coordination point for NADP(+).

This sequence belongs to the nitrate reductase family. In terms of assembly, homodimer. FAD serves as cofactor. The cofactor is heme. Mo-molybdopterin is required as a cofactor.

The catalysed reaction is nitrite + NADP(+) + H2O = nitrate + NADPH + H(+). It functions in the pathway nitrogen metabolism; nitrate reduction (assimilation). In terms of biological role, nitrate reductase is a key enzyme involved in the first step of nitrate assimilation in plants, fungi and bacteria. This chain is Nitrate reductase [NADPH] (nit-3), found in Neurospora crassa (strain ATCC 24698 / 74-OR23-1A / CBS 708.71 / DSM 1257 / FGSC 987).